Here is a 280-residue protein sequence, read N- to C-terminus: Orotidine 5'-phosphate decarboxylase (280 aa).

The active-site Proton donor is K97.

Belongs to the OMP decarboxylase family. Type 2 subfamily.

The enzyme catalyses orotidine 5'-phosphate + H(+) = UMP + CO2. It participates in pyrimidine metabolism; UMP biosynthesis via de novo pathway; UMP from orotate: step 2/2. The polypeptide is Orotidine 5'-phosphate decarboxylase (pyrF) (Corynebacterium efficiens (strain DSM 44549 / YS-314 / AJ 12310 / JCM 11189 / NBRC 100395)).